Consider the following 368-residue polypeptide: MRGFPREVLESVWKIVDDVQSGGLKAALEYSKRLDGVAPEPHLVTPRQGGDPEVVSAALAAAKSLEALYSRISPPAAVDFYGGILRQILWKPVRRAALYVPARYISTLVMLAVPARLAGVEEVYVVTPPRGVSEELLAVAKELGVKAVLALGGPHGLAYAVFHMGVDVVAGPGGLYVQAAKYILSQYVGIDGIEGPTELVIYAEGVPPEVAVRGALAQLEHGPTSFAYLLSPDGELLKKAEELYVRERTSSMGPLKVKKVGGIDEAVSFIDEIAPEHLEVWGRREVAYRVRNVGAVSVNMPSPYLDYVAGISHVLPTGGTARWRGVITPLAFMKPIGIAEAVGELTLREAARKLAEYEGFKYHGEALR.

Threonine 197, glutamine 218, and histidine 221 together coordinate substrate. Residues glutamine 218 and histidine 221 each coordinate Zn(2+). Active-site proton acceptor residues include glutamate 276 and histidine 277. Positions 277, 306, 358, and 363 each coordinate substrate. Position 306 (aspartate 306) interacts with Zn(2+). Histidine 363 lines the Zn(2+) pocket.

It belongs to the histidinol dehydrogenase family. Requires Zn(2+) as cofactor.

It carries out the reaction L-histidinol + 2 NAD(+) + H2O = L-histidine + 2 NADH + 3 H(+). The protein operates within amino-acid biosynthesis; L-histidine biosynthesis; L-histidine from 5-phospho-alpha-D-ribose 1-diphosphate: step 9/9. Functionally, catalyzes the sequential NAD-dependent oxidations of L-histidinol to L-histidinaldehyde and then to L-histidine. This Pyrobaculum aerophilum (strain ATCC 51768 / DSM 7523 / JCM 9630 / CIP 104966 / NBRC 100827 / IM2) protein is Histidinol dehydrogenase.